A 241-amino-acid chain; its full sequence is Triosephosphate isomerase (241 aa).

9–11 contacts substrate; the sequence is NWK. The active-site Electrophile is the histidine 96. Glutamate 165 serves as the catalytic Proton acceptor. Substrate is bound by residues glycine 171, serine 204, and 225 to 226; that span reads GG.

The protein belongs to the triosephosphate isomerase family. In terms of assembly, homodimer.

It is found in the cytoplasm. The catalysed reaction is D-glyceraldehyde 3-phosphate = dihydroxyacetone phosphate. It functions in the pathway carbohydrate biosynthesis; gluconeogenesis. Its pathway is carbohydrate degradation; glycolysis; D-glyceraldehyde 3-phosphate from glycerone phosphate: step 1/1. In terms of biological role, involved in the gluconeogenesis. Catalyzes stereospecifically the conversion of dihydroxyacetone phosphate (DHAP) to D-glyceraldehyde-3-phosphate (G3P). The protein is Triosephosphate isomerase of Gloeothece citriformis (strain PCC 7424) (Cyanothece sp. (strain PCC 7424)).